A 712-amino-acid polypeptide reads, in one-letter code: Ribosomal RNA large subunit methyltransferase K/L (712 aa).

The 112-residue stretch at 43–154 (LAYRITLWTR…NGQLTISMNF (112 aa)) folds into the THUMP domain.

The protein belongs to the methyltransferase superfamily. RlmKL family.

It localises to the cytoplasm. It carries out the reaction guanosine(2445) in 23S rRNA + S-adenosyl-L-methionine = N(2)-methylguanosine(2445) in 23S rRNA + S-adenosyl-L-homocysteine + H(+). The catalysed reaction is guanosine(2069) in 23S rRNA + S-adenosyl-L-methionine = N(2)-methylguanosine(2069) in 23S rRNA + S-adenosyl-L-homocysteine + H(+). Specifically methylates the guanine in position 2445 (m2G2445) and the guanine in position 2069 (m7G2069) of 23S rRNA. The protein is Ribosomal RNA large subunit methyltransferase K/L of Shewanella frigidimarina (strain NCIMB 400).